The primary structure comprises 131 residues: Fumarate reductase subunit C (131 aa).

The next 3 membrane-spanning stretches (helical) occupy residues 30 to 50, 58 to 78, and 109 to 129; these read EGTC…VFAL, AGFV…VTLI, and IVRG…AVAL.

It belongs to the FrdC family. Part of an enzyme complex containing four subunits: a flavoprotein (FrdA), an iron-sulfur protein (FrdB), and two hydrophobic anchor proteins (FrdC and FrdD).

The protein resides in the cell inner membrane. Its function is as follows. Two distinct, membrane-bound, FAD-containing enzymes are responsible for the catalysis of fumarate and succinate interconversion; fumarate reductase is used in anaerobic growth, and succinate dehydrogenase is used in aerobic growth. Anchors the catalytic components of the fumarate reductase complex to the cell inner membrane, binds quinones. This Proteus vulgaris protein is Fumarate reductase subunit C.